The primary structure comprises 398 residues: Phosphoglycerate kinase (398 aa).

Substrate contacts are provided by residues 21 to 23 (DFN), Arg36, 59 to 62 (HLGR), Arg119, and Arg157. Residues Lys208, Gly296, Glu327, and 354–357 (GGDS) each bind ATP.

Belongs to the phosphoglycerate kinase family. In terms of assembly, monomer.

Its subcellular location is the cytoplasm. The enzyme catalyses (2R)-3-phosphoglycerate + ATP = (2R)-3-phospho-glyceroyl phosphate + ADP. It participates in carbohydrate degradation; glycolysis; pyruvate from D-glyceraldehyde 3-phosphate: step 2/5. The chain is Phosphoglycerate kinase from Streptococcus sanguinis (strain SK36).